The primary structure comprises 387 residues: Putative transposase y4pF/y4sB (387 aa).

This sequence belongs to the transposase 20 family.

The protein is Putative transposase y4pF/y4sB of Sinorhizobium fredii (strain NBRC 101917 / NGR234).